The following is a 476-amino-acid chain: Eukaryotic translation initiation factor 3 subunit L (476 aa).

One can recognise a PCI domain in the interval 257-452 (DAIRMFSHIL…DLDYALENDL (196 aa)).

The protein belongs to the eIF-3 subunit L family. As to quaternary structure, component of the eukaryotic translation initiation factor 3 (eIF-3) complex.

The protein resides in the cytoplasm. Component of the eukaryotic translation initiation factor 3 (eIF-3) complex, which is involved in protein synthesis of a specialized repertoire of mRNAs and, together with other initiation factors, stimulates binding of mRNA and methionyl-tRNAi to the 40S ribosome. The eIF-3 complex specifically targets and initiates translation of a subset of mRNAs involved in cell proliferation. In Aspergillus clavatus (strain ATCC 1007 / CBS 513.65 / DSM 816 / NCTC 3887 / NRRL 1 / QM 1276 / 107), this protein is Eukaryotic translation initiation factor 3 subunit L.